A 308-amino-acid polypeptide reads, in one-letter code: tRNA dimethylallyltransferase (308 aa).

An ATP-binding site is contributed by 14-21 (GPTASGKT). 16–21 (TASGKT) contributes to the substrate binding site. Interaction with substrate tRNA regions lie at residues 39-42 (DSAL), 163-167 (QRLAR), and 244-249 (RCVGYR).

It belongs to the IPP transferase family. As to quaternary structure, monomer. Mg(2+) serves as cofactor.

The catalysed reaction is adenosine(37) in tRNA + dimethylallyl diphosphate = N(6)-dimethylallyladenosine(37) in tRNA + diphosphate. Functionally, catalyzes the transfer of a dimethylallyl group onto the adenine at position 37 in tRNAs that read codons beginning with uridine, leading to the formation of N6-(dimethylallyl)adenosine (i(6)A). In Shewanella piezotolerans (strain WP3 / JCM 13877), this protein is tRNA dimethylallyltransferase.